The sequence spans 1404 residues: ABC transporter G family member 47 (1404 aa).

The ABC transporter 1 domain occupies Gly156–Glu423. Gly189–Thr196 is a binding site for ATP. The ABC transmembrane type-2 1 domain occupies Glu501–Phe714. 7 helical membrane-spanning segments follow: residues Phe519–Phe539, Met565–Phe585, Thr607–Phe627, Phe638–Leu658, Val663–Ile683, Trp692–Asn712, and Val751–Phe771. The region spanning Ile808–Glu1059 is the ABC transporter 2 domain. ATP is bound at residue Gly852–Thr859. Positions Thr1132–Phe1346 constitute an ABC transmembrane type-2 2 domain. 7 consecutive transmembrane segments (helical) span residues Ile1152–Gly1172, Leu1183–Val1199, Leu1239–Tyr1259, Phe1266–Met1286, Thr1298–Leu1318, Ile1321–Leu1341, and Leu1373–Gly1393.

This sequence belongs to the ABC transporter superfamily. ABCG family. PDR (TC 3.A.1.205) subfamily.

Its subcellular location is the membrane. In terms of biological role, may be a general defense protein. The sequence is that of ABC transporter G family member 47 from Oryza sativa subsp. japonica (Rice).